The chain runs to 125 residues: Calcitonin receptor-stimulating peptide 1 (125 aa).

Positions 1-25 are cleaved as a signal peptide; it reads MGFWKFPPFLVLSILVLYQAGMFHA. Residues 26–77 constitute a propeptide that is removed on maturation; sequence APFRSVFDGRFDPATLDEEESRLLLAAMVNDYEQMRARESEKAQKTEGSRIQ. Cysteines 81 and 86 form a disulfide.

This sequence belongs to the calcitonin family.

The protein resides in the secreted. Its function is as follows. Stimulates cAMP production in porcine kidney cell line LLC-PK1 via the calcitonin receptor (CT) but not via the CT-like (CL) receptor. The polypeptide is Calcitonin receptor-stimulating peptide 1 (CRSP1) (Bos taurus (Bovine)).